Reading from the N-terminus, the 65-residue chain is Adrenergic toxin rho-elapitoxin-Dp1b (65 aa).

Disulfide bonds link Cys3-Cys24, Cys17-Cys42, Cys46-Cys57, and Cys58-Cys63.

The protein belongs to the three-finger toxin family. Short-chain subfamily. Aminergic toxin sub-subfamily. In terms of tissue distribution, expressed by the venom gland.

Its subcellular location is the secreted. In terms of biological role, highly potent on various alpha-adrenoceptors (ADRA) (subnanomolar affinity for ADRA1A). Order of potency is the following: ADRA1A (Ki=0.37 nM) &gt; ADRA1B (Ki=10.47 nM) &gt; ADRA1D (Ki=104.71 nM) &gt; ADRA2C (Ki=165.96 nM). Were also found to reversibly bind to muscarinic acetylcholine receptors (CHRM), but the affinity is much weaker (CHRM1, Ki=1778.28 nM; CHRM4, Ki=4466.84 nM; CHRM2, Ki=17782.79 nM). The protein is Adrenergic toxin rho-elapitoxin-Dp1b of Dendroaspis polylepis polylepis (Black mamba).